Reading from the N-terminus, the 227-residue chain is Ribonuclease 3 (227 aa).

The RNase III domain occupies 4–126; sequence LDRLERKIGY…IIGAMSLDQG (123 aa). Residue E39 participates in Mg(2+) binding. D43 is an active-site residue. 2 residues coordinate Mg(2+): D112 and E115. The active site involves E115. The DRBM domain occupies 153–226; that stretch reads DAKTRLQEYL…AEQILKELDI (74 aa).

The protein belongs to the ribonuclease III family. Homodimer. The cofactor is Mg(2+).

The protein localises to the cytoplasm. The catalysed reaction is Endonucleolytic cleavage to 5'-phosphomonoester.. In terms of biological role, digests double-stranded RNA. Involved in the processing of primary rRNA transcript to yield the immediate precursors to the large and small rRNAs (23S and 16S). Processes some mRNAs, and tRNAs when they are encoded in the rRNA operon. Processes pre-crRNA and tracrRNA of type II CRISPR loci if present in the organism. The chain is Ribonuclease 3 from Haemophilus influenzae (strain ATCC 51907 / DSM 11121 / KW20 / Rd).